Here is a 299-residue protein sequence, read N- to C-terminus: Sulfate adenylyltransferase subunit 2 (299 aa).

Residues 276–299 form a disordered region; the sequence is EREGRVIDHDSAGSMEKKKREGYF.

The protein belongs to the PAPS reductase family. CysD subfamily. In terms of assembly, heterodimer composed of CysD, the smaller subunit, and CysN.

The enzyme catalyses sulfate + ATP + H(+) = adenosine 5'-phosphosulfate + diphosphate. Its pathway is sulfur metabolism; hydrogen sulfide biosynthesis; sulfite from sulfate: step 1/3. Its function is as follows. With CysN forms the ATP sulfurylase (ATPS) that catalyzes the adenylation of sulfate producing adenosine 5'-phosphosulfate (APS) and diphosphate, the first enzymatic step in sulfur assimilation pathway. APS synthesis involves the formation of a high-energy phosphoric-sulfuric acid anhydride bond driven by GTP hydrolysis by CysN coupled to ATP hydrolysis by CysD. This is Sulfate adenylyltransferase subunit 2 from Pseudoalteromonas translucida (strain TAC 125).